Here is a 277-residue protein sequence, read N- to C-terminus: Energy-coupling factor transporter ATP-binding protein EcfA1 (277 aa).

The region spanning 4–238 is the ABC transporter domain; it reads IETKNLNYSY…SELLSKNDLK (235 aa). 38–45 is an ATP binding site; sequence GKNGSGKS.

Belongs to the ABC transporter superfamily. Energy-coupling factor EcfA family. As to quaternary structure, forms a stable energy-coupling factor (ECF) transporter complex composed of 2 membrane-embedded substrate-binding proteins (S component), 2 ATP-binding proteins (A component) and 2 transmembrane proteins (T component).

Its subcellular location is the cell membrane. Functionally, ATP-binding (A) component of a common energy-coupling factor (ECF) ABC-transporter complex. Unlike classic ABC transporters this ECF transporter provides the energy necessary to transport a number of different substrates. This Oenococcus oeni (strain ATCC BAA-331 / PSU-1) protein is Energy-coupling factor transporter ATP-binding protein EcfA1.